A 161-amino-acid chain; its full sequence is Extracellular giant hemoglobin major globin subunit B1 (161 aa).

A signal peptide spans 1–16 (MTILVLFLSCAALASA). The 144-residue stretch at 18-161 (CCSRGDAEVV…YIAAGIGAGL (144 aa)) folds into the Globin domain. A disulfide bridge links C19 with C149. H112 provides a ligand contact to heme b.

The protein belongs to the globin family. The 400 kDa hemoglobin consists of a spherical 24-mer arranged as a double layer of dome-shaped dodecamers. Each dodecamer is composed of the 3-fold trimer of the tetramer A1-A2-B1-B2 having one intra-tetramer (A1-B2) disulfide bond and one inter-tetramer (B1-B2) disulfide bond per tetramer.

The protein localises to the secreted. In terms of biological role, the extracellular giant hemoglobin is able to bind and transport oxygen and sulfide simultaneously and reversibly at two different sites. The polypeptide is Extracellular giant hemoglobin major globin subunit B1 (ghbB1) (Oligobrachia mashikoi (Beard worm)).